Here is a 320-residue protein sequence, read N- to C-terminus: tRNA-cytidine(32) 2-sulfurtransferase (320 aa).

Positions 54-59 (SGGKDS) match the PP-loop motif motif. 3 residues coordinate [4Fe-4S] cluster: cysteine 129, cysteine 132, and cysteine 220.

The protein belongs to the TtcA family. In terms of assembly, homodimer. It depends on Mg(2+) as a cofactor. [4Fe-4S] cluster is required as a cofactor.

The protein localises to the cytoplasm. It carries out the reaction cytidine(32) in tRNA + S-sulfanyl-L-cysteinyl-[cysteine desulfurase] + AH2 + ATP = 2-thiocytidine(32) in tRNA + L-cysteinyl-[cysteine desulfurase] + A + AMP + diphosphate + H(+). The protein operates within tRNA modification. Functionally, catalyzes the ATP-dependent 2-thiolation of cytidine in position 32 of tRNA, to form 2-thiocytidine (s(2)C32). The sulfur atoms are provided by the cysteine/cysteine desulfurase (IscS) system. This Bordetella bronchiseptica (strain ATCC BAA-588 / NCTC 13252 / RB50) (Alcaligenes bronchisepticus) protein is tRNA-cytidine(32) 2-sulfurtransferase.